Consider the following 911-residue polypeptide: General transcription factor 3C polypeptide 2 (911 aa).

Disordered regions lie at residues 34–187 (LDVK…RRRA) and 205–297 (ALPA…MAPN). The span at 35–46 (DVKTSSEMTSAE) shows a compositional bias: polar residues. Ser63 bears the Phosphoserine mark. Residues 64–81 (PDQRRLPPEQESLSRLEQ) are compositionally biased toward basic and acidic residues. The segment covering 92–112 (SKPRASKPGRKRGGRTRKGPK) has biased composition (basic residues). Residues 114-123 (PQQPNPPSAP) are compositionally biased toward pro residues. Ser132, Ser165, Ser167, Ser220, and Ser260 each carry phosphoserine. Residues 253 to 262 (EAEDVEESEG) are compositionally biased toward acidic residues. Residues 263–275 (PSESSSEPEPAVP) show a composition bias toward low complexity. WD repeat units lie at residues 465–521 (CDNG…ALLA) and 552–593 (SECG…PLQR). Ser597 bears the Phosphoserine mark. The stretch at 611–651 (AHDQAVRTLQWCKANSHFLASAGSDRKIKFWDLRRPYEPIN) is one WD 3 repeat. The interval 765–785 (SPEGPDHSSASSGVPNPPKAR) is disordered. The WD 4 repeat unit spans residues 832–874 (LQLEAIHKVRFSPNLDSYGWLVSGGQSGLVRIHFVRGLASPLG). 3 positions are modified to phosphoserine: Ser871, Ser892, and Ser893. The interval 889–911 (FQPSSPTRRPGFSPTSHRLLPTP) is disordered. At Thr895 the chain carries Phosphothreonine. Ser901 is subject to Phosphoserine.

In terms of assembly, part of the TFIIIC subcomplex TFIIIC2, consisting of six subunits, GTF3C1, GTF3C2, GTF3C3, GTF3C4, GTF3C5 and GTF3C6.

The protein resides in the nucleus. Required for RNA polymerase III-mediated transcription. Component of TFIIIC that initiates transcription complex assembly on tRNA and is required for transcription of 5S rRNA and other stable nuclear and cytoplasmic RNAs. May play a direct role in stabilizing interactions of TFIIIC2 with TFIIIC1. This Pongo abelii (Sumatran orangutan) protein is General transcription factor 3C polypeptide 2 (GTF3C2).